Reading from the N-terminus, the 393-residue chain is Acetylornithine aminotransferase (393 aa).

Pyridoxal 5'-phosphate contacts are provided by residues 105–106 (GA) and Phe-138. Arg-141 contributes to the N(2)-acetyl-L-ornithine binding site. Residue 224-227 (DEVQ) coordinates pyridoxal 5'-phosphate. At Lys-253 the chain carries N6-(pyridoxal phosphate)lysine. Residue Ser-281 participates in N(2)-acetyl-L-ornithine binding. Thr-282 contributes to the pyridoxal 5'-phosphate binding site.

The protein belongs to the class-III pyridoxal-phosphate-dependent aminotransferase family. ArgD subfamily. Homodimer. Pyridoxal 5'-phosphate serves as cofactor.

It is found in the cytoplasm. The catalysed reaction is N(2)-acetyl-L-ornithine + 2-oxoglutarate = N-acetyl-L-glutamate 5-semialdehyde + L-glutamate. It functions in the pathway amino-acid biosynthesis; L-arginine biosynthesis; N(2)-acetyl-L-ornithine from L-glutamate: step 4/4. This chain is Acetylornithine aminotransferase, found in Haemophilus ducreyi (strain 35000HP / ATCC 700724).